Reading from the N-terminus, the 455-residue chain is Probable glycine dehydrogenase (decarboxylating) subunit 1 (455 aa).

The protein belongs to the GcvP family. N-terminal subunit subfamily. In terms of assembly, the glycine cleavage system is composed of four proteins: P, T, L and H. In this organism, the P 'protein' is a heterodimer of two subunits.

The catalysed reaction is N(6)-[(R)-lipoyl]-L-lysyl-[glycine-cleavage complex H protein] + glycine + H(+) = N(6)-[(R)-S(8)-aminomethyldihydrolipoyl]-L-lysyl-[glycine-cleavage complex H protein] + CO2. In terms of biological role, the glycine cleavage system catalyzes the degradation of glycine. The P protein binds the alpha-amino group of glycine through its pyridoxal phosphate cofactor; CO(2) is released and the remaining methylamine moiety is then transferred to the lipoamide cofactor of the H protein. This is Probable glycine dehydrogenase (decarboxylating) subunit 1 from Saccharolobus islandicus (strain M.16.27) (Sulfolobus islandicus).